The primary structure comprises 611 residues: Pleckstrin homology domain-containing family N member 1 (611 aa).

The disordered stretch occupies residues 1–45 (MGNSHCVPQAPRRLRASFSRKPSLKGNREDSARMSAGLPGPEAAR). Residue Gly-2 is the site of N-myristoyl glycine attachment. The tract at residues 61 to 100 (TDILDLENQRENLEQPFLSVFKKGRRRVPVRNLGKVVHYA) is interaction with C1QBP. PH domains lie at 96–192 (VVHY…TALL) and 222–319 (AVCA…THRE). Tyr-302 bears the Phosphotyrosine mark. 3 disordered regions span residues 323-424 (PLPG…PVTP), 438-468 (ESSP…TSHR), and 483-611 (MQSA…VQWI). The segment covering 341–350 (GSLSSGGQTS) has biased composition (low complexity). A compositionally biased stretch (polar residues) spans 360-391 (STRTSHSLPESSVPSTVGCSSQHTPDQANSDR). Residue Tyr-456 is modified to Phosphotyrosine. Residues 498-509 (VPVSVPASDPRS) are compositionally biased toward low complexity. Position 559 is a phosphoserine (Ser-559). The segment covering 570 to 585 (RSPRRSRDPGYDHLWD) has biased composition (basic and acidic residues).

In terms of assembly, found in a complex with cytochrome c mRNA and various ribosomal proteins. Interacts with C1QBP. Interacts with ELAVL1. Interacts with BID. Phosphorylation is essential for its mitochondrial localization and regulates its interaction with C1QBP. As to expression, ubiquitous. Epressed in several cancer cell lines of differing origin.

The protein localises to the cell membrane. It is found in the mitochondrion. Its subcellular location is the mitochondrion membrane. Functionally, controls the stability of the leptin mRNA harboring an AU-rich element (ARE) in its 3' UTR, in cooperation with the RNA stabilizer ELAVL1. Decreases the stability of the leptin mRNA by antagonizing the function of ELAVL1 by inducing its atypical recruitment from the nucleus to the cytosol. Binds to cardiolipin (CL), phosphatidic acid (PA), phosphatidylinositol 4-phosphate (PtdIns(4)P) and phosphatidylserine (PS). Promotes apoptosis by enhancing BAX-BAK hetero-oligomerization via interaction with BID in colon cancer cells. The chain is Pleckstrin homology domain-containing family N member 1 (PLEKHN1) from Homo sapiens (Human).